A 127-amino-acid chain; its full sequence is Probable 4-amino-4-deoxy-L-arabinose-phosphoundecaprenol flippase subunit ArnF (127 aa).

Residues methionine 1–methionine 21 traverse the membrane as a helical segment. Topologically, residues lysine 22–alanine 48 are periplasmic. A helical membrane pass occupies residues valine 49–leucine 69. Residues arginine 70 to alanine 77 lie on the Cytoplasmic side of the membrane. Residues tyrosine 78–leucine 98 form a helical membrane-spanning segment. Residues histidine 99–proline 101 lie on the Periplasmic side of the membrane. Residues phenylalanine 102 to leucine 122 traverse the membrane as a helical segment. Topologically, residues proline 123 to serine 127 are cytoplasmic.

Belongs to the ArnF family. In terms of assembly, heterodimer of ArnE and ArnF.

The protein localises to the cell inner membrane. The protein operates within bacterial outer membrane biogenesis; lipopolysaccharide biosynthesis. In terms of biological role, translocates 4-amino-4-deoxy-L-arabinose-phosphoundecaprenol (alpha-L-Ara4N-phosphoundecaprenol) from the cytoplasmic to the periplasmic side of the inner membrane. The sequence is that of Probable 4-amino-4-deoxy-L-arabinose-phosphoundecaprenol flippase subunit ArnF from Enterobacter sp. (strain 638).